The chain runs to 302 residues: Recombination-associated protein RdgC (302 aa).

This sequence belongs to the RdgC family.

It is found in the cytoplasm. The protein localises to the nucleoid. May be involved in recombination. The protein is Recombination-associated protein RdgC of Psychromonas ingrahamii (strain DSM 17664 / CCUG 51855 / 37).